The sequence spans 243 residues: tRNA (guanine-N(1)-)-methyltransferase (243 aa).

S-adenosyl-L-methionine contacts are provided by residues Gly-108 and 127 to 132 (LGDFVL).

The protein belongs to the RNA methyltransferase TrmD family. In terms of assembly, homodimer.

It localises to the cytoplasm. The catalysed reaction is guanosine(37) in tRNA + S-adenosyl-L-methionine = N(1)-methylguanosine(37) in tRNA + S-adenosyl-L-homocysteine + H(+). Its function is as follows. Specifically methylates guanosine-37 in various tRNAs. The polypeptide is tRNA (guanine-N(1)-)-methyltransferase (Streptococcus equi subsp. zooepidemicus (strain MGCS10565)).